The chain runs to 98 residues: uncharacterized protein (98 aa).

The protein belongs to the CFAP97 family.

This is an uncharacterized protein from Homo sapiens (Human).